A 728-amino-acid polypeptide reads, in one-letter code: Glycine--tRNA ligase (728 aa).

Residues M1–L32 constitute a mitochondrion transit peptide. Positions L52 to V108 constitute a WHEP-TRS domain. K193 is modified (N6-acetyllysine). E288 is a binding site for glycine. Residues R320 to E322 and R331 to V332 each bind ATP. E339 provides a ligand contact to glycine. Y442 is subject to Phosphotyrosine. E446–I447 provides a ligand contact to ATP. The residue at position 490 (K490) is an N6-acetyllysine. E565–S567 provides a ligand contact to glycine. Residue R572 coordinates ATP. At S689 the chain carries Phosphoserine. Residue T725 is modified to Phosphothreonine.

It belongs to the class-II aminoacyl-tRNA synthetase family. In terms of assembly, homodimer.

Its subcellular location is the cytoplasm. The protein localises to the mitochondrion. It localises to the cell projection. It is found in the axon. The protein resides in the secreted. Its subcellular location is the extracellular exosome. The enzyme catalyses tRNA(Gly) + glycine + ATP = glycyl-tRNA(Gly) + AMP + diphosphate. It catalyses the reaction 2 ATP + H(+) = P(1),P(4)-bis(5'-adenosyl) tetraphosphate + diphosphate. Catalyzes the ATP-dependent ligation of glycine to the 3'-end of its cognate tRNA, via the formation of an aminoacyl-adenylate intermediate (Gly-AMP). Also produces diadenosine tetraphosphate (Ap4A), a universal pleiotropic signaling molecule needed for cell regulation pathways, by direct condensation of 2 ATPs. Thereby, may play a special role in Ap4A homeostasis. The protein is Glycine--tRNA ligase (Gars1) of Rattus norvegicus (Rat).